We begin with the raw amino-acid sequence, 1032 residues long: Toll-like receptor 9 (1032 aa).

The signal sequence occupies residues 1 to 25 (MVLRRRTLHPLSLLVQAAVLAETLA). Topologically, residues 26–818 (LGTLPAFLPC…LCLDEVLSWD (793 aa)) are extracellular. A disulfide bond links cysteine 35 and cysteine 45. 47–51 (WLFLK) contributes to the DNA binding site. LRR repeat units follow at residues 62–85 (CSNI…DFVH), 87–110 (SNLR…HFSC), 122–147 (MRTL…SLVN), 150–166 (LSHT…LAGL), 167–190 (YSLR…AVKV), 198–221 (LSNL…LPPS), 223–242 (EYLL…DLAN), 243–268 (LTSL…CIEC), 283–306 (LSHL…WFQG), 308–332 (VNLS…AFQN), 333–356 (LTRL…RLHL), 363–386 (LVSL…TLRW), 390–413 (LPKL…IFGT), 415–440 (RALR…TPEE), 471–495 (CKNF…MFVN), 497–520 (SRLQ…QFLP), 521–544 (LTNL…SFSE), 546–573 (PQLQ…SFVT), 575–599 (LSML…LNSN), 601–623 (VRFL…LYLH), 628–651 (LSGL…NLDN), 653–676 (PKSL…SLSF), 677–700 (LPNL…TLPN), 702–724 (TLLQ…FFAL), 725–748 (AVEL…WFGP), and 750–773 (VMNL…AFVD). Asparagine 64 carries N-linked (GlcNAc...) asparagine glycosylation. Residues 72–77 (SNRIHH) and 95–109 (KWNC…LHFS) each bind DNA. Cysteines 98 and 110 form a disulfide. N-linked (GlcNAc...) asparagine glycosylation is present at asparagine 129. Tyrosine 132 contributes to the DNA binding site. N-linked (GlcNAc...) asparagine glycosylation is present at asparagine 147. Cysteines 178 and 184 form a disulfide. DNA is bound at residue 179-181 (YYK). N-linked (GlcNAc...) asparagine glycosylation is present at asparagine 200. Residue tyrosine 208 participates in DNA binding. N-linked (GlcNAc...) asparagine glycans are attached at residues asparagine 210 and asparagine 242. Intrachain disulfides connect cysteine 255–cysteine 268 and cysteine 258–cysteine 265. Residues cysteine 258 and cysteine 265 are each lipidated (S-palmitoyl cysteine). Residues asparagine 300, asparagine 309, asparagine 332, and asparagine 340 are each glycosylated (N-linked (GlcNAc...) asparagine). Positions 430-462 (PSTLSEATPEEADDAEQEELLSADPHPAPLSTP) are disordered. Positions 437 to 450 (TPEEADDAEQEELL) are enriched in acidic residues. Cysteine 471 and cysteine 501 are oxidised to a cystine. Residues asparagine 495 and asparagine 514 are each glycosylated (N-linked (GlcNAc...) asparagine). Asparagine 568 is a glycosylation site (N-linked (GlcNAc...) asparagine). N-linked (GlcNAc...) asparagine glycans are attached at residues asparagine 670, asparagine 695, and asparagine 700. N-linked (GlcNAc...) asparagine glycosylation is found at asparagine 732 and asparagine 752. 2 cysteine pairs are disulfide-bonded: cysteine 765–cysteine 791 and cysteine 767–cysteine 810. The helical transmembrane segment at 819–839 (CFGLSLLAVAVGMVVPILHHL) threads the bilayer. Over 840–1032 (CGWDVWYCFH…QNFCRGPTAE (193 aa)) the chain is Cytoplasmic. In terms of domain architecture, TIR spans 868–1013 (LPYDAFVVFD…GFWAQLSTAL (146 aa)).

The protein belongs to the Toll-like receptor family. Monomer and homodimer. Exists as a monomer in the absence of unmethylated cytidine-phosphate-guanosine (CpG) ligand. Proteolytic processing of an insertion loop (Z-loop) is required for homodimerization upon binding to the unmethylated CpG ligand leading to its activation. Interacts with MYD88 via their respective TIR domains. Interacts with BTK. Interacts (via transmembrane domain) with UNC93B1. Interacts with CD300LH; the interaction may promote full activation of TLR9-triggered innate responses. Interacts with CNPY3 and HSP90B1; this interaction is required for proper folding in the endoplasmic reticulum. Interacts with SMPDL3B. Interacts with CD82; this interaction is essential for TLR9-dependent myddosome formation in response to CpG stimulation. Post-translationally, activated by proteolytic cleavage of the flexible loop between repeats LRR14 and LRR15 within the ectodomain. Cleavage requires UNC93B1. Proteolytically processed by first removing the majority of the ectodomain by either asparagine endopeptidase (AEP) or a cathepsin followed by a trimming event that is solely cathepsin mediated and required for optimal receptor signaling. In terms of processing, palmitoylated by ZDHHC3 in the Golgi regulates TLR9 trafficking from the Golgi to endosomes. Depalmitoylation by PPT1 controls the release of TLR9 from UNC93B1 in endosomes. In terms of tissue distribution, expressed in the basolateral region of gastric epithelial cells with high levels detected in antrum and body mucosa (at protein level). Detected in spleen and stomach at higher levels in C57BL/6 mice than BALB/C.

It localises to the endoplasmic reticulum membrane. The protein resides in the endosome. The protein localises to the lysosome. Its subcellular location is the cytoplasmic vesicle. It is found in the phagosome. Key component of innate and adaptive immunity. TLRs (Toll-like receptors) control host immune response against pathogens through recognition of molecular patterns specific to microorganisms. TLR9 is a nucleotide-sensing TLR which is activated by unmethylated cytidine-phosphate-guanosine (CpG) dinucleotides. Acts via MYD88 and TRAF6, leading to NF-kappa-B activation, cytokine secretion and the inflammatory response. Plays a role in defense against systemic mouse cytomegalovirus infection. Controls lymphocyte response to Helicobacter infection. Upon CpG stimulation, induces B-cell proliferation, activation, survival and antibody production. This is Toll-like receptor 9 (Tlr9) from Mus musculus (Mouse).